A 119-amino-acid polypeptide reads, in one-letter code: Large ribosomal subunit protein bL20 (119 aa).

This sequence belongs to the bacterial ribosomal protein bL20 family.

In terms of biological role, binds directly to 23S ribosomal RNA and is necessary for the in vitro assembly process of the 50S ribosomal subunit. It is not involved in the protein synthesizing functions of that subunit. The chain is Large ribosomal subunit protein bL20 from Streptococcus equi subsp. equi (strain 4047).